Consider the following 138-residue polypeptide: Basic phospholipase A2 DAV-N6 (138 aa).

The N-terminal stretch at 1 to 16 (MRTLWIVAVLLVSVEG) is a signal peptide. 7 disulfide bridges follow: Cys-42–Cys-131, Cys-44–Cys-60, Cys-59–Cys-111, Cys-65–Cys-138, Cys-66–Cys-104, Cys-73–Cys-97, and Cys-91–Cys-102. Residues Tyr-43, Gly-45, and Gly-47 each contribute to the Ca(2+) site. His-63 is a catalytic residue. Residue Asp-64 coordinates Ca(2+). Residue Asp-105 is part of the active site.

Requires Ca(2+) as cofactor. As to expression, expressed by the venom gland.

The protein localises to the secreted. The catalysed reaction is a 1,2-diacyl-sn-glycero-3-phosphocholine + H2O = a 1-acyl-sn-glycero-3-phosphocholine + a fatty acid + H(+). In terms of biological role, snake venom phospholipase A2 (PLA2) that inhibits neuromuscular transmission by blocking acetylcholine release from the nerve termini. PLA2 catalyzes the calcium-dependent hydrolysis of the 2-acyl groups in 3-sn-phosphoglycerides. This Deinagkistrodon acutus (Hundred-pace snake) protein is Basic phospholipase A2 DAV-N6.